The chain runs to 314 residues: MATSLFFMSTDQNSVGNPNDLLRNTRLVVNSSGEIRTETLKSRGRKPGSKTGQQKQKKPTLRGMGVAKLERQRIEEEKKQLAAATVGDTSSVASISNNATRLPVPVDPGVVLQGFPSSLGSNRIYCGGVGSGQVMIDPVISPWGFVETSSTTHELSSISNPQMFNASSNNRCDTCFKKKRLDGDQNNVVRSNGGGFSKYTMIPPPMNGYDQYLLQSDHHQRSQGFLYDHRIARAASVSASSTTINPYFNEATNHTGPMEEFGSYMEGNPRNGSGGVKEYEFFPGKYGERVSVVAKTSSLVGDCSPNTIDLSLKL.

Positions 1–17 are enriched in polar residues; that stretch reads MATSLFFMSTDQNSVGN. 2 disordered regions span residues 1 to 20 and 33 to 62; these read MATS…NPND and GEIR…PTLR. The short motif at 62 to 70 is the SPL element; that stretch reads RGMGVAKLE. Positions 308–314 match the EAR motif; the sequence is IDLSLKL.

It belongs to the NOZZLE family. Homodimer and heterodimer with SPEARs. Interacts in vitro with YAB1, YAB3 and YAB4. Interacts (via EAR motif) with TPL, TPR1, TPR2, TPR3 and TPR4. Interacts with SPEAR1, SPEAR2, SPEAR3, SPEAR4, TCP1, TCP6, TCP8, TCP9, TCP11, TCP15, TCP20, TCP21 and TCP23. Interacts with TCP2, TCP3, TCP4, TCP5, TCP10, TCP13, TCP17 and TCP24. Expressed in flower buds. Not found in leaves, siliques and stems. Detected in rosette leaves, stem tissue and seedlings.

The protein resides in the nucleus. Functionally, transcriptional regulator of sporocyte development. Acts as an adapter-like transcriptional repressor recruiting TPL/TPR corepressors to inhibit TCP transcription factors. Required for nucellus and embryo sac development. Plays a central role in patterning both the proximal-distal and the adaxial-abaxial axes during ovule development. Involved in establishing the prospective chalaza of the ovule and in controlling the cell number and the length of the funiculus, and is required for the development of the integuments. Required, with BEL1, for cytokinin-induced PIN1 expression in ovules. Involved in controlling stamen identity. May also regulate the morphology of lateral organs by repressing auxin production. This is Protein SPOROCYTELESS from Arabidopsis thaliana (Mouse-ear cress).